We begin with the raw amino-acid sequence, 472 residues long: Glutamate--tRNA ligase 1 (472 aa).

The short motif at 9 to 19 (PSPTGLLHVGN) is the 'HIGH' region element. Residues 112 to 131 (AMAEKRPPRYDGTWRDRDPS) are compositionally biased toward basic and acidic residues. Positions 112–133 (AMAEKRPPRYDGTWRDRDPSEA) are disordered. Positions 238-242 (KLSKR) match the 'KMSKS' region motif. K241 lines the ATP pocket.

It belongs to the class-I aminoacyl-tRNA synthetase family. Glutamate--tRNA ligase type 1 subfamily. In terms of assembly, monomer.

The protein resides in the cytoplasm. The catalysed reaction is tRNA(Glu) + L-glutamate + ATP = L-glutamyl-tRNA(Glu) + AMP + diphosphate. In terms of biological role, catalyzes the attachment of glutamate to tRNA(Glu) in a two-step reaction: glutamate is first activated by ATP to form Glu-AMP and then transferred to the acceptor end of tRNA(Glu). The chain is Glutamate--tRNA ligase 1 from Gluconobacter oxydans (strain 621H) (Gluconobacter suboxydans).